The primary structure comprises 155 residues: Histone H2B.5 (155 aa).

Composition is skewed to basic and acidic residues over residues 1-28 (MAPKAEKKPAAKKPAEEEPAAEKAEKAP) and 36-54 (EKRLPAGKGEKGSGEGKKD). Residues 1–63 (MAPKAEKKPA…DRAGRKKAKK (63 aa)) form a disordered region. K7 and K37 each carry N6-acetyllysine. Residue K151 forms a Glycyl lysine isopeptide (Lys-Gly) (interchain with G-Cter in ubiquitin) linkage.

It belongs to the histone H2B family. As to quaternary structure, the nucleosome is a histone octamer containing two molecules each of H2A, H2B, H3 and H4 assembled in one H3-H4 heterotetramer and two H2A-H2B heterodimers. The octamer wraps approximately 147 bp of DNA. Can be acetylated to form H2BK6ac and H2BK33ac. Post-translationally, monoubiquitinated by BRE1 to form H2BK143ub1 and deubiquitinated by UBP26. Required for heterochromatic histone H3 di- and trimethylation at H3K4me. May give a specific tag for epigenetic transcriptional activation.

It is found in the nucleus. The protein localises to the chromosome. Functionally, core component of nucleosome. Nucleosomes wrap and compact DNA into chromatin, limiting DNA accessibility to the cellular machineries which require DNA as a template. Histones thereby play a central role in transcription regulation, DNA repair, DNA replication and chromosomal stability. DNA accessibility is regulated via a complex set of post-translational modifications of histones, also called histone code, and nucleosome remodeling. This Oryza sativa subsp. japonica (Rice) protein is Histone H2B.5 (H2B.5).